The sequence spans 301 residues: Transmembrane protein 178A (301 aa).

Residues 1–25 form the signal peptide; it reads MEKRALVTAISLSMSLLALMLLVTA. Residues 26–183 lie on the Extracellular side of the membrane; that stretch reads IFTDHWYETD…LLHLRRITAG (158 aa). N-linked (GlcNAc...) asparagine glycosylation occurs at Asn-162. The chain crosses the membrane as a helical span at residues 184-204; it reads FLGMAAAVMLCGSIVAAVGFF. The Cytoplasmic segment spans residues 205 to 215; that stretch reads WEESLTQHVSG. A helical transmembrane segment spans residues 216–236; it reads LLFLMAGIFCTISLCTYAASV. Over 237–258 the chain is Extracellular; that stretch reads SYDLSRNPPFIYGLPSDVDHGY. Residues 259 to 279 traverse the membrane as a helical segment; the sequence is GWSIFCAWVSLGLTVASGCIC. Over 280–301 the chain is Cytoplasmic; it reads TTYPFLSRTKALRSKTARESSV.

The protein belongs to the TMEM178 family.

The protein localises to the endoplasmic reticulum membrane. May act as a negative regulator of osteoclast differentiation. The protein is Transmembrane protein 178A (tmem178a) of Danio rerio (Zebrafish).